A 596-amino-acid polypeptide reads, in one-letter code: Nuclear receptor subfamily 2 group C member 2 (596 aa).

S19 is subject to Phosphoserine; by MAPK. Residue S46 is modified to Phosphoserine. S55 and S68 each carry phosphoserine; by MAPK. At S98 the chain carries Phosphoserine. Residues 114–189 (VEYCVVCGDK…MGMKMESVQS (76 aa)) constitute a DNA-binding region (nuclear receptor). 2 consecutive NR C4-type zinc fingers follow at residues 117-137 (CVVC…CEGC) and 153-177 (CRSS…LKKC). K192 participates in a covalent cross-link: Glycyl lysine isopeptide (Lys-Gly) (interchain with G-Cter in SUMO2). S219 bears the Phosphoserine mark. An N6-acetyllysine modification is found at K231. Positions 341 to 583 (GSIHVISRDQ…SIIPYILKME (243 aa)) constitute an NR LBD domain.

Belongs to the nuclear hormone receptor family. NR2 subfamily. Homodimer; can bind DNA as homodimer. Heterodimer; binds DNA as a heterodimer with NR2C1 required for chromatin remodeling and for binding to promoter regions such as globin DR1 repeats. Interacts with NR2C2AP; the interaction represses selective NR2C2-mediated transcriptional activity. Interacts with PCAF; the interaction preferentially occurs on the non-phosphorylated form and induces NR2C2-mediated transactivation activity and does not require the ligand-binding domain. Interacts (MAPK-mediated phosphorylated form) with NRIP1; the interaction promotes repression of NR2C2-mediated activity. Interacts with NLRP10. Interacts (via ligand-binding region) with transcriptional corepressor JAZF1; the interaction promotes NR2C2-mediated transcriptional repression. Post-translationally, phosphorylation on Ser-19 and Ser-68 is an important regulator of NR2C2-mediated transcriptional activity. Phosphorylation on these residues recruits the corepressor, NRIP1, leading to transcripional repression, whereas the non-phosphorylated form preferentially recruits the coactivator, PCAF. In terms of tissue distribution, expressed, during embryogenesis, in perichondrium, developing glomeruli structures and tubules of kidney, as well as in intestiinal villi. Also expressed in lung and hair follicles.

It localises to the nucleus. Functionally, orphan nuclear receptor that can act as a repressor or activator of transcription. An important repressor of nuclear receptor signaling pathways such as retinoic acid receptor, retinoid X, vitamin D3 receptor, thyroid hormone receptor and estrogen receptor pathways. May regulate gene expression during the late phase of spermatogenesis. Activates transcriptional activity of LHCG and is antagonist of PPARA-mediated transactivation. Together with NR2C1, forms the core of the DRED (direct repeat erythroid-definitive) complex that represses embryonic and fetal globin transcription including that of GATA1. Binds to hormone response elements (HREs) consisting of two 5'-AGGTCA-3' half site direct repeat consensus sequences. Plays a fundamental role in early embryonic development and embryonic stem cells. Required for normal spermatogenesis and cerebellum development. Appears to be important for neurodevelopmentally regulated behavior. The polypeptide is Nuclear receptor subfamily 2 group C member 2 (Nr2c2) (Mus musculus (Mouse)).